Here is a 248-residue protein sequence, read N- to C-terminus: Aspartate/glutamate leucyltransferase (248 aa).

This sequence belongs to the R-transferase family. Bpt subfamily.

The protein localises to the cytoplasm. The catalysed reaction is N-terminal L-glutamyl-[protein] + L-leucyl-tRNA(Leu) = N-terminal L-leucyl-L-glutamyl-[protein] + tRNA(Leu) + H(+). It catalyses the reaction N-terminal L-aspartyl-[protein] + L-leucyl-tRNA(Leu) = N-terminal L-leucyl-L-aspartyl-[protein] + tRNA(Leu) + H(+). In terms of biological role, functions in the N-end rule pathway of protein degradation where it conjugates Leu from its aminoacyl-tRNA to the N-termini of proteins containing an N-terminal aspartate or glutamate. The protein is Aspartate/glutamate leucyltransferase of Methylobacillus flagellatus (strain ATCC 51484 / DSM 6875 / VKM B-1610 / KT).